A 113-amino-acid chain; its full sequence is Protein FMC1 homolog (113 aa).

Positions Ser94 to Pro113 are disordered.

Belongs to the FMC1 family. In terms of assembly, interacts with ATPAF2.

The protein resides in the mitochondrion. Functionally, plays a role in the assembly/stability of the mitochondrial membrane ATP synthase (F(1)F(0) ATP synthase or Complex V). The protein is Protein FMC1 homolog of Homo sapiens (Human).